The chain runs to 327 residues: BTB/POZ domain-containing protein KCTD12 (327 aa).

The disordered stretch occupies residues 1–28 (MALADSARGLPNGGGGGGGSGSSSSSAE). N-acetylalanine is present on alanine 2. Residues 11–21 (PNGGGGGGGSG) show a composition bias toward gly residues. Tyrosine 119 carries the post-translational modification Phosphotyrosine. The interval 129-204 (LGAPQQPGPG…PLLTPSQSLD (76 aa)) is disordered. Phosphoserine occurs at positions 153, 173, and 187. Residue threonine 198 is modified to Phosphothreonine. Serine 202 bears the Phosphoserine mark.

Interacts as a tetramer with GABBR1 and GABBR2. In terms of tissue distribution, expressed in the brain, mainly in the hippocampus and cerebellum.

The protein localises to the presynaptic cell membrane. It is found in the postsynaptic cell membrane. Functionally, auxiliary subunit of GABA-B receptors that determine the pharmacology and kinetics of the receptor response. Increases agonist potency and markedly alter the G-protein signaling of the receptors by accelerating onset and promoting desensitization. The sequence is that of BTB/POZ domain-containing protein KCTD12 (Kctd12) from Mus musculus (Mouse).